A 744-amino-acid polypeptide reads, in one-letter code: Phosphoribosylformylglycinamidine synthase subunit PurL (744 aa).

The active site involves histidine 50. Residues tyrosine 53 and lysine 92 each contribute to the ATP site. Mg(2+) is bound at residue glutamate 94. Residues 95-98 (SHNH) and arginine 117 contribute to the substrate site. Residue histidine 96 is the Proton acceptor of the active site. Residue aspartate 118 participates in Mg(2+) binding. Glutamine 241 serves as a coordination point for substrate. Aspartate 269 is a binding site for Mg(2+). 313–315 (ESQ) is a substrate binding site. The ATP site is built by aspartate 494 and glycine 531. Position 532 (asparagine 532) interacts with Mg(2+). A substrate-binding site is contributed by serine 534.

The protein belongs to the FGAMS family. In terms of assembly, monomer. Part of the FGAM synthase complex composed of 1 PurL, 1 PurQ and 2 PurS subunits.

The protein resides in the cytoplasm. It catalyses the reaction N(2)-formyl-N(1)-(5-phospho-beta-D-ribosyl)glycinamide + L-glutamine + ATP + H2O = 2-formamido-N(1)-(5-O-phospho-beta-D-ribosyl)acetamidine + L-glutamate + ADP + phosphate + H(+). It participates in purine metabolism; IMP biosynthesis via de novo pathway; 5-amino-1-(5-phospho-D-ribosyl)imidazole from N(2)-formyl-N(1)-(5-phospho-D-ribosyl)glycinamide: step 1/2. In terms of biological role, part of the phosphoribosylformylglycinamidine synthase complex involved in the purines biosynthetic pathway. Catalyzes the ATP-dependent conversion of formylglycinamide ribonucleotide (FGAR) and glutamine to yield formylglycinamidine ribonucleotide (FGAM) and glutamate. The FGAM synthase complex is composed of three subunits. PurQ produces an ammonia molecule by converting glutamine to glutamate. PurL transfers the ammonia molecule to FGAR to form FGAM in an ATP-dependent manner. PurS interacts with PurQ and PurL and is thought to assist in the transfer of the ammonia molecule from PurQ to PurL. In Chelativorans sp. (strain BNC1), this protein is Phosphoribosylformylglycinamidine synthase subunit PurL.